Reading from the N-terminus, the 274-residue chain is Thymidylate synthase (274 aa).

Arg-21 is a dUMP binding site. A (6R)-5,10-methylene-5,6,7,8-tetrahydrofolate-binding site is contributed by His-51. 123–124 (RR) is a binding site for dUMP. Cys-156 acts as the Nucleophile in catalysis. Residues 176 to 179 (RSAD), Asn-187, and 217 to 219 (HIY) contribute to the dUMP site. Asp-179 is a (6R)-5,10-methylene-5,6,7,8-tetrahydrofolate binding site. Residue Ser-273 participates in (6R)-5,10-methylene-5,6,7,8-tetrahydrofolate binding.

The protein belongs to the thymidylate synthase family. Bacterial-type ThyA subfamily. Homodimer.

Its subcellular location is the cytoplasm. The catalysed reaction is dUMP + (6R)-5,10-methylene-5,6,7,8-tetrahydrofolate = 7,8-dihydrofolate + dTMP. It participates in pyrimidine metabolism; dTTP biosynthesis. Functionally, catalyzes the reductive methylation of 2'-deoxyuridine-5'-monophosphate (dUMP) to 2'-deoxythymidine-5'-monophosphate (dTMP) while utilizing 5,10-methylenetetrahydrofolate (mTHF) as the methyl donor and reductant in the reaction, yielding dihydrofolate (DHF) as a by-product. This enzymatic reaction provides an intracellular de novo source of dTMP, an essential precursor for DNA biosynthesis. This is Thymidylate synthase from Francisella tularensis subsp. holarctica (strain FTNF002-00 / FTA).